Here is a 448-residue protein sequence, read N- to C-terminus: C4-dicarboxylate transport protein (448 aa).

Helical transmembrane passes span 20–38 (LYFQ…GHFY), 53–75 (IRLV…IAGM), 88–110 (AMIY…ANTV), 161–178 (ILQV…LGIV), 199–220 (LVAI…FTIG), 230–252 (LAML…LGAV), 325–347 (LFIA…LLVA), and 362–384 (FITL…ALIL).

This sequence belongs to the dicarboxylate/amino acid:cation symporter (DAACS) (TC 2.A.23) family.

It localises to the cell inner membrane. In terms of biological role, responsible for the transport of dicarboxylates such as succinate, fumarate, and malate from the periplasm across the membrane. The polypeptide is C4-dicarboxylate transport protein (Agrobacterium fabrum (strain C58 / ATCC 33970) (Agrobacterium tumefaciens (strain C58))).